The chain runs to 270 residues: NAD kinase (270 aa).

Asp45 serves as the catalytic Proton acceptor. NAD(+) contacts are provided by residues 45–46 (DG), 121–122 (NE), Arg147, Asp149, 160–165 (TAYSKS), and Ala184.

It belongs to the NAD kinase family. The cofactor is a divalent metal cation.

The protein localises to the cytoplasm. The enzyme catalyses NAD(+) + ATP = ADP + NADP(+) + H(+). Functionally, involved in the regulation of the intracellular balance of NAD and NADP, and is a key enzyme in the biosynthesis of NADP. Catalyzes specifically the phosphorylation on 2'-hydroxyl of the adenosine moiety of NAD to yield NADP. The protein is NAD kinase of Lactobacillus helveticus (strain DPC 4571).